The primary structure comprises 371 residues: Ferrochelatase (371 aa).

Positions 218 and 299 each coordinate Fe cation.

Belongs to the ferrochelatase family.

It is found in the cytoplasm. It catalyses the reaction heme b + 2 H(+) = protoporphyrin IX + Fe(2+). The protein operates within porphyrin-containing compound metabolism; protoheme biosynthesis; protoheme from protoporphyrin-IX: step 1/1. Functionally, catalyzes the ferrous insertion into protoporphyrin IX. This is Ferrochelatase from Cupriavidus pinatubonensis (strain JMP 134 / LMG 1197) (Cupriavidus necator (strain JMP 134)).